The sequence spans 89 residues: Putative defensin-like protein 40 (89 aa).

A signal peptide spans 1–26 (MAGIANGVGLLISFMLICGGMPKGHA). Intrachain disulfides connect cysteine 33–cysteine 88, cysteine 46–cysteine 69, cysteine 55–cysteine 81, and cysteine 59–cysteine 83.

The protein belongs to the DEFL family.

It localises to the secreted. This chain is Putative defensin-like protein 40, found in Arabidopsis thaliana (Mouse-ear cress).